Here is a 146-residue protein sequence, read N- to C-terminus: MORN repeat-containing protein 4 (146 aa).

4 MORN repeats span residues 16-38 (YRGE…DGGT), 39-61 (YLGH…DGSR), 62-84 (YEGE…DNMT), and 85-107 (FEGE…DGSH).

In terms of assembly, interacts with MYO3A. As to expression, retina.

Its subcellular location is the cytoplasm. It localises to the cell projection. It is found in the filopodium tip. The protein localises to the stereocilium. Plays a role in promoting axonal degeneration following neuronal injury by toxic insult or trauma. The polypeptide is MORN repeat-containing protein 4 (MORN4) (Bos taurus (Bovine)).